The primary structure comprises 142 residues: Hemoglobin subunit alpha (142 aa).

Ser1 is modified (N-acetylserine). Residues 1-142 form the Globin domain; the sequence is SLSDKDKAAV…LSLALAEKYR (142 aa). Heme b contacts are provided by His59 and His88.

This sequence belongs to the globin family. Heterotetramer of two alpha chains and two beta chains. Red blood cells.

Involved in oxygen transport from gills to the various peripheral tissues. In Lycodes reticulatus (Arctic eelpout), this protein is Hemoglobin subunit alpha.